The chain runs to 123 residues: uncharacterized protein (123 aa).

The helical transmembrane segment at 1–21 threads the bilayer; that stretch reads MHIIAKSILLMAVSFLVIIFT.

Its subcellular location is the membrane. This is an uncharacterized protein from Methanocaldococcus jannaschii (strain ATCC 43067 / DSM 2661 / JAL-1 / JCM 10045 / NBRC 100440) (Methanococcus jannaschii).